The following is an 846-amino-acid chain: Translation initiation factor IF-2 (846 aa).

Residues 198 to 219 are disordered; sequence YKREEEEKKSKAKKAGGKGFKK. The segment covering 207–219 has biased composition (basic residues); it reads SKAKKAGGKGFKK. One can recognise a tr-type G domain in the interval 345 to 512; that stretch reads SRAPVVTIMG…AVLLQSEVLE (168 aa). Residues 354 to 361 form a G1 region; the sequence is GHVDHGKT. Position 354 to 361 (354 to 361) interacts with GTP; that stretch reads GHVDHGKT. The tract at residues 379–383 is G2; sequence GITQH. The interval 400–403 is G3; the sequence is DTPG. GTP is bound by residues 400–404 and 454–457; these read DTPGH and NKID. The segment at 454–457 is G4; it reads NKID. Positions 490-492 are G5; sequence SAK.

It belongs to the TRAFAC class translation factor GTPase superfamily. Classic translation factor GTPase family. IF-2 subfamily.

The protein resides in the cytoplasm. Functionally, one of the essential components for the initiation of protein synthesis. Protects formylmethionyl-tRNA from spontaneous hydrolysis and promotes its binding to the 30S ribosomal subunits. Also involved in the hydrolysis of GTP during the formation of the 70S ribosomal complex. The polypeptide is Translation initiation factor IF-2 (Francisella tularensis subsp. novicida (strain U112)).